We begin with the raw amino-acid sequence, 153 residues long: Fucose mutarotase (153 aa).

The Proton donor role is filled by histidine 24. Aspartate 32 contributes to the substrate binding site. Aspartate 69 is an active-site residue. Substrate contacts are provided by methionine 78, tyrosine 119, tyrosine 137, and asparagine 139. Tyrosine 119 is an active-site residue.

The protein belongs to the RbsD / FucU family.

The catalysed reaction is alpha-L-fucose = beta-L-fucose. In terms of biological role, involved in the interconversion between alpha- and beta-L-fucoses. The sequence is that of Fucose mutarotase (fuom) from Danio rerio (Zebrafish).